Reading from the N-terminus, the 198-residue chain is FMN-dependent NADH:quinone oxidoreductase (198 aa).

FMN-binding positions include serine 10, 16–18 (SQS), 94–97 (MYNF), and 138–141 (TRGG).

Belongs to the azoreductase type 1 family. In terms of assembly, homodimer. Requires FMN as cofactor.

It catalyses the reaction 2 a quinone + NADH + H(+) = 2 a 1,4-benzosemiquinone + NAD(+). The enzyme catalyses N,N-dimethyl-1,4-phenylenediamine + anthranilate + 2 NAD(+) = 2-(4-dimethylaminophenyl)diazenylbenzoate + 2 NADH + 2 H(+). Quinone reductase that provides resistance to thiol-specific stress caused by electrophilic quinones. Functionally, also exhibits azoreductase activity. Catalyzes the reductive cleavage of the azo bond in aromatic azo compounds to the corresponding amines. The chain is FMN-dependent NADH:quinone oxidoreductase from Shewanella baltica (strain OS195).